The chain runs to 104 residues: DNA-directed RNA polymerase subunit omega (104 aa).

Belongs to the RNA polymerase subunit omega family. As to quaternary structure, the RNAP catalytic core consists of 2 alpha, 1 beta, 1 beta' and 1 omega subunit. When a sigma factor is associated with the core the holoenzyme is formed, which can initiate transcription.

The enzyme catalyses RNA(n) + a ribonucleoside 5'-triphosphate = RNA(n+1) + diphosphate. Functionally, promotes RNA polymerase assembly. Latches the N- and C-terminal regions of the beta' subunit thereby facilitating its interaction with the beta and alpha subunits. This Streptococcus suis (strain 05ZYH33) protein is DNA-directed RNA polymerase subunit omega.